Reading from the N-terminus, the 347-residue chain is MRIEEDLKLGFKDVLIRPKRSTLKSRSDVELERQFTFKHSGQSWSGVPIIAANMDTVGTFSMASALASFDILTAVHKHYSVEEWQAFINNSSADVLKHVMVSTGTSDADFEKTKQILDLNPALNFVCIDVANGYSEHFVQFVAKAREAWPTKTICAGNVVTGEMCEELILSGADIVKVGIGPGSVCTTRVKTGVGYPQLSAVIECADAAHGLGGMIVSDGGCTTPGDVAKAFGGGADFVMLGGMLAGHEESGGRIIEENGEKFMLFYGMSSESAMKRHVGGVAEYRAAEGKTVKLPLRGPVENTARDILGGLRSACTYVGASRLKELTKRTTFIRVQEQENRIFNNL.

108–131 serves as a coordination point for NADP(+); sequence ADFEKTKQILDLNPALNFVCIDVA. 2 residues coordinate K(+): G181 and G183. The Thioimidate intermediate role is filled by C186. 216-239 is a binding site for NADP(+); sequence IVSDGGCTTPGDVAKAFGGGADFV.

It belongs to the IMPDH/GMPR family. GuaC type 1 subfamily. As to quaternary structure, homotetramer.

The catalysed reaction is IMP + NH4(+) + NADP(+) = GMP + NADPH + 2 H(+). Catalyzes the irreversible NADPH-dependent deamination of GMP to IMP. It functions in the conversion of nucleobase, nucleoside and nucleotide derivatives of G to A nucleotides, and in maintaining the intracellular balance of A and G nucleotides. The polypeptide is GMP reductase (Escherichia coli O139:H28 (strain E24377A / ETEC)).